The chain runs to 303 residues: MEENYKLSHLRELEAESIHIIREVAAEFENPVMLYSIGKDSSVMVRLAEKAFYPGKVPFPLMHIDSKWKFREMIEFRDQYAKEHGWNLIVESNMEAFNAGVGPFTHGSKVHTDLMKTQALLHGLDKYRFDAAFGGARRDEEKSRAKERIFSFRDRFHQWDPKNQRPELWDIYNAKIHKGESIRVFPLSNWTELDIWQYIRLENIPIVPLYFAKERPVVNIDGNLIMADDDRLPEEYRDRIEMKKVRFRTLGCWPLTGAVESDADTIEKIVEEMMTTTKSERTTRVIDFDQDASMEQKKREGYF.

Belongs to the PAPS reductase family. CysD subfamily. In terms of assembly, heterodimer composed of CysD, the smaller subunit, and CysN.

The catalysed reaction is sulfate + ATP + H(+) = adenosine 5'-phosphosulfate + diphosphate. The protein operates within sulfur metabolism; hydrogen sulfide biosynthesis; sulfite from sulfate: step 1/3. Functionally, with CysN forms the ATP sulfurylase (ATPS) that catalyzes the adenylation of sulfate producing adenosine 5'-phosphosulfate (APS) and diphosphate, the first enzymatic step in sulfur assimilation pathway. APS synthesis involves the formation of a high-energy phosphoric-sulfuric acid anhydride bond driven by GTP hydrolysis by CysN coupled to ATP hydrolysis by CysD. In Phocaeicola vulgatus (strain ATCC 8482 / DSM 1447 / JCM 5826 / CCUG 4940 / NBRC 14291 / NCTC 11154) (Bacteroides vulgatus), this protein is Sulfate adenylyltransferase subunit 2.